The primary structure comprises 183 residues: Pyruvoyl-dependent arginine decarboxylase 2 (183 aa).

Serine 41 bears the Pyruvic acid (Ser) mark.

This sequence belongs to the PdaD family. Pyruvate serves as cofactor.

The catalysed reaction is L-arginine + H(+) = agmatine + CO2. The polypeptide is Pyruvoyl-dependent arginine decarboxylase 2 (pdaD2) (Methanosarcina acetivorans (strain ATCC 35395 / DSM 2834 / JCM 12185 / C2A)).